A 287-amino-acid polypeptide reads, in one-letter code: MEGIIIKGIGGFYYIKTDEGIIECKARGKFRYNSLKPMVGDRVTIKVENGKGVIEDIHERSSELIRPTVANVTQAFVVFAIKNPDINLDLLNRFLTLCEYNDIHAVVCLNKEDLCTEEEKENLKELINDIGYEVLFINAKEGKGFDALKERLEHNITVLCGPSGAGKSTLLNSFIDREHMETGSVSEKIGRGKHTTRHSELIDVDNGYLVDTPGFTTLDVTFIDRDSLKYCFPEFNDYNNLCKFNGCNHYKEPKCAVKEAVEEGKINKLRYDFYIKTLEEIINRRGN.

Residues 61–218 (SSELIRPTVA…LVDTPGFTTL (158 aa)) form the CP-type G domain. GTP is bound by residues 110–113 (NKED) and 161–169 (GPSGAGKST). Residues Cys242, Cys247, His249, and Cys255 each contribute to the Zn(2+) site.

Belongs to the TRAFAC class YlqF/YawG GTPase family. RsgA subfamily. In terms of assembly, monomer. Associates with 30S ribosomal subunit, binds 16S rRNA. The cofactor is Zn(2+).

The protein resides in the cytoplasm. One of several proteins that assist in the late maturation steps of the functional core of the 30S ribosomal subunit. Helps release RbfA from mature subunits. May play a role in the assembly of ribosomal proteins into the subunit. Circularly permuted GTPase that catalyzes slow GTP hydrolysis, GTPase activity is stimulated by the 30S ribosomal subunit. The chain is Small ribosomal subunit biogenesis GTPase RsgA from Clostridium perfringens (strain ATCC 13124 / DSM 756 / JCM 1290 / NCIMB 6125 / NCTC 8237 / Type A).